We begin with the raw amino-acid sequence, 215 residues long: Cytochrome b6 (215 aa).

The helical transmembrane segment at 32–52 threads the bilayer; the sequence is IFYCLGGITLTCFLVQVATGF. Residue Cys-35 coordinates heme c. His-86 and His-100 together coordinate heme b. Helical transmembrane passes span 90–110, 116–136, and 186–206; these read ASMM…TGGF, LTWV…VTGY, and LHTF…FPMI. His-187 and His-202 together coordinate heme b.

Belongs to the cytochrome b family. PetB subfamily. In terms of assembly, the 4 large subunits of the cytochrome b6-f complex are cytochrome b6, subunit IV (17 kDa polypeptide, PetD), cytochrome f and the Rieske protein, while the 4 small subunits are PetG, PetL, PetM and PetN. The complex functions as a dimer. Heme b serves as cofactor. The cofactor is heme c.

Its subcellular location is the plastid. It localises to the chloroplast thylakoid membrane. In terms of biological role, component of the cytochrome b6-f complex, which mediates electron transfer between photosystem II (PSII) and photosystem I (PSI), cyclic electron flow around PSI, and state transitions. In Saccharum hybrid (Sugarcane), this protein is Cytochrome b6.